The following is a 591-amino-acid chain: Indole-3-acetic acid-amido synthetase GH3.10 (591 aa).

The protein belongs to the IAA-amido conjugating enzyme family. In terms of tissue distribution, expressed in cotyledons and hypocotyls.

Its function is as follows. Catalyzes the synthesis of indole-3-acetic acid (IAA)-amino acid conjugates, providing a mechanism for the plant to cope with the presence of excess auxin. Involved in red light-specific hypocotyl elongation. May act downstream of a red light signal transduction and determine the degree of hypocotyl elongation. This chain is Indole-3-acetic acid-amido synthetase GH3.10, found in Arabidopsis thaliana (Mouse-ear cress).